Reading from the N-terminus, the 105-residue chain is Pyrimidine/purine nucleoside phosphorylase (105 aa).

The protein belongs to the nucleoside phosphorylase PpnP family.

The enzyme catalyses a purine D-ribonucleoside + phosphate = a purine nucleobase + alpha-D-ribose 1-phosphate. It carries out the reaction adenosine + phosphate = alpha-D-ribose 1-phosphate + adenine. It catalyses the reaction cytidine + phosphate = cytosine + alpha-D-ribose 1-phosphate. The catalysed reaction is guanosine + phosphate = alpha-D-ribose 1-phosphate + guanine. The enzyme catalyses inosine + phosphate = alpha-D-ribose 1-phosphate + hypoxanthine. It carries out the reaction thymidine + phosphate = 2-deoxy-alpha-D-ribose 1-phosphate + thymine. It catalyses the reaction uridine + phosphate = alpha-D-ribose 1-phosphate + uracil. The catalysed reaction is xanthosine + phosphate = alpha-D-ribose 1-phosphate + xanthine. Its function is as follows. Catalyzes the phosphorolysis of diverse nucleosides, yielding D-ribose 1-phosphate and the respective free bases. Can use uridine, adenosine, guanosine, cytidine, thymidine, inosine and xanthosine as substrates. Also catalyzes the reverse reactions. The chain is Pyrimidine/purine nucleoside phosphorylase from Delftia acidovorans (strain DSM 14801 / SPH-1).